The chain runs to 78 residues: uncharacterized protein (78 aa).

The signal sequence occupies residues 1–27 (MQNSKTDMCAALWAVTGLVLNVAVRFA).

This is an uncharacterized protein from Dryophytes versicolor (chameleon treefrog).